The sequence spans 623 residues: Chaperone protein DnaK (623 aa).

Phosphothreonine; by autocatalysis is present on threonine 197. The tract at residues 600–623 (KKDENAGANGGNKKDDDVIDAEVE) is disordered.

The protein belongs to the heat shock protein 70 family.

In terms of biological role, acts as a chaperone. The chain is Chaperone protein DnaK from Campylobacter concisus (strain 13826).